We begin with the raw amino-acid sequence, 135 residues long: Probable disulfide formation protein (135 aa).

The chain crosses the membrane as a helical span at residues 7–26 (SYCLYLAWLFSCIGTLMSVY). Cysteines 36 and 39 form a disulfide. Transmembrane regions (helical) follow at residues 41-60 (YQRICLFPLVVILGIAAYRE) and 67-84 (YTLPLALVGFGIAIYQVC). A disulfide bridge links cysteine 96 with cysteine 101. Residues 109–131 (GFITMPMASAAAFCAIACLLVLA) traverse the membrane as a helical segment.

It belongs to the DsbB family. BdbC subfamily.

It is found in the cell inner membrane. Required for disulfide bond formation in some proteins. The polypeptide is Probable disulfide formation protein (Chlamydia trachomatis serovar D (strain ATCC VR-885 / DSM 19411 / UW-3/Cx)).